Reading from the N-terminus, the 456-residue chain is Glycine--tRNA ligase (456 aa).

R98 and E168 together coordinate substrate. Residues 200–202 (RNE), 210–215 (FRTREF), 285–286 (EL), and 329–332 (GVER) contribute to the ATP site. 215–219 (FEQME) contributes to the substrate binding site. 325-329 (EPSVG) is a binding site for substrate.

It belongs to the class-II aminoacyl-tRNA synthetase family. In terms of assembly, homodimer.

It is found in the cytoplasm. It carries out the reaction tRNA(Gly) + glycine + ATP = glycyl-tRNA(Gly) + AMP + diphosphate. Functionally, catalyzes the attachment of glycine to tRNA(Gly). The protein is Glycine--tRNA ligase of Mycoplasma mycoides subsp. mycoides SC (strain CCUG 32753 / NCTC 10114 / PG1).